The primary structure comprises 198 residues: 5'-deoxynucleotidase hdd1 (198 aa).

The HD domain occupies 38 to 144 (IADHMYRMGI…VKDIDKFEMI (107 aa)). Residues His-41, His-69, Asp-70, Glu-73, Asp-78, Ile-79, and Asp-139 each contribute to the a divalent metal cation site.

This sequence belongs to the HDDC2 family. As to quaternary structure, homodimer. The cofactor is Mn(2+). It depends on Co(2+) as a cofactor. Requires Mg(2+) as cofactor.

It localises to the cytoplasm. Its subcellular location is the nucleus. It catalyses the reaction a 2'-deoxyribonucleoside 5'-phosphate + H2O = a 2'-deoxyribonucleoside + phosphate. Catalyzes the dephosphorylation of the nucleoside 5'-monophosphates deoxyadenosine monophosphate (dAMP), deoxycytidine monophosphate (dCMP), deoxyguanosine monophosphate (dGMP) and deoxythymidine monophosphate (dTMP). The chain is 5'-deoxynucleotidase hdd1 from Schizosaccharomyces pombe (strain 972 / ATCC 24843) (Fission yeast).